Consider the following 500-residue polypeptide: Glycogen synthase (500 aa).

Residue Lys-20 participates in ADP-alpha-D-glucose binding.

The protein belongs to the glycosyltransferase 1 family. Bacterial/plant glycogen synthase subfamily.

It catalyses the reaction [(1-&gt;4)-alpha-D-glucosyl](n) + ADP-alpha-D-glucose = [(1-&gt;4)-alpha-D-glucosyl](n+1) + ADP + H(+). The protein operates within glycan biosynthesis; glycogen biosynthesis. Its function is as follows. Synthesizes alpha-1,4-glucan chains using ADP-glucose. In Desulforudis audaxviator (strain MP104C), this protein is Glycogen synthase.